The following is a 98-amino-acid chain: DNA-binding protein Fis (98 aa).

Positions 74–93 (QTRAALMMGINRGTLRKKLK) form a DNA-binding region, H-T-H motif.

This sequence belongs to the transcriptional regulatory Fis family. As to quaternary structure, homodimer.

Its function is as follows. Activates ribosomal RNA transcription. Plays a direct role in upstream activation of rRNA promoters. In Yersinia enterocolitica serotype O:8 / biotype 1B (strain NCTC 13174 / 8081), this protein is DNA-binding protein Fis.